Consider the following 503-residue polypeptide: Cobyric acid synthase (503 aa).

Positions 260–453 constitute a GATase cobBQ-type domain; the sequence is KIGVAAIYFP…FHALFDESSV (194 aa). The active-site Nucleophile is cysteine 341. The active site involves histidine 445.

The protein belongs to the CobB/CobQ family. CobQ subfamily.

The protein operates within cofactor biosynthesis; adenosylcobalamin biosynthesis. In terms of biological role, catalyzes amidations at positions B, D, E, and G on adenosylcobyrinic A,C-diamide. NH(2) groups are provided by glutamine, and one molecule of ATP is hydrogenolyzed for each amidation. The sequence is that of Cobyric acid synthase from Pelodictyon phaeoclathratiforme (strain DSM 5477 / BU-1).